A 555-amino-acid chain; its full sequence is Vacuolar fusion protein MON1 homolog A (555 aa).

A compositionally biased stretch (basic and acidic residues) spans 1–12; it reads MAADMQRKRSSE. Residues 1–87 form a disordered region; it reads MAADMQRKRS…RGPPPLPADM (87 aa). 2 positions are modified to phosphoserine: S31 and S56. The residue at position 61 (T61) is a Phosphothreonine. Residue S91 is modified to Phosphoserine. Positions 114–147 are disordered; that stretch reads PGSSEDWLDPPGAVGRPATEPPREGTAEGDEEDA.

Belongs to the MON1/SAND family. In terms of assembly, interacts with CCZ1. Found in a complex with RMC1, CCZ1, MON1A and MON1B. The MON1A-CCZ1B complex interacts with RIMOC1. The MON1A-CCZ1B complex interacts with RAB7A and this interaction is enhanced in the presence of RIMOC1.

Functionally, plays an important role in membrane trafficking through the secretory apparatus. Not involved in endocytic trafficking to lysosomes. Acts in concert with CCZ1, as a guanine exchange factor (GEF) for RAB7, promotes the exchange of GDP to GTP, converting it from an inactive GDP-bound form into an active GTP-bound form. The protein is Vacuolar fusion protein MON1 homolog A (MON1A) of Macaca fascicularis (Crab-eating macaque).